The sequence spans 209 residues: D-aminoacyl-tRNA deacylase 1 (209 aa).

Val-4, Gln-6, and Cys-28 together coordinate Mg(2+). The short motif at 139–140 (GP) is the Gly-cisPro motif, important for rejection of L-amino acids element. The interval 142-209 (TIELESPAPG…EGDVSSEREP (68 aa)) is disordered. Basic and acidic residues-rich tracts occupy residues 159–170 (QLSKLEKQQQRK) and 181–194 (SSKE…EDRS). Residues Ser-197, Ser-204, and Ser-205 each carry the phosphoserine modification.

Belongs to the DTD family. In terms of assembly, homodimer. Interacts with CDC45 and TOPBP1. In terms of processing, preferentially phosphorylated in cells arrested early in S phase. Phosphorylation in the C-terminus weakens the interaction with CDC45.

It localises to the nucleus. The protein localises to the cytoplasm. It carries out the reaction glycyl-tRNA(Ala) + H2O = tRNA(Ala) + glycine + H(+). The enzyme catalyses a D-aminoacyl-tRNA + H2O = a tRNA + a D-alpha-amino acid + H(+). Its function is as follows. An aminoacyl-tRNA editing enzyme that deacylates mischarged D-aminoacyl-tRNAs. Also deacylates mischarged glycyl-tRNA(Ala), protecting cells against glycine mischarging by AlaRS. Acts via tRNA-based rather than protein-based catalysis; rejects L-amino acids rather than detecting D-amino acids in the active site. By recycling D-aminoacyl-tRNA to D-amino acids and free tRNA molecules, this enzyme counteracts the toxicity associated with the formation of D-aminoacyl-tRNA entities in vivo and helps enforce protein L-homochirality. Functionally, ATPase involved in DNA replication, may facilitate loading of CDC45 onto pre-replication complexes. The chain is D-aminoacyl-tRNA deacylase 1 (DTD1) from Bos taurus (Bovine).